The primary structure comprises 444 residues: Phosphoglucosamine mutase (444 aa).

S102 functions as the Phosphoserine intermediate in the catalytic mechanism. Residues S102, D241, D243, and D245 each coordinate Mg(2+). Position 102 is a phosphoserine (S102).

This sequence belongs to the phosphohexose mutase family. The cofactor is Mg(2+). Post-translationally, activated by phosphorylation.

It carries out the reaction alpha-D-glucosamine 1-phosphate = D-glucosamine 6-phosphate. Functionally, catalyzes the conversion of glucosamine-6-phosphate to glucosamine-1-phosphate. The polypeptide is Phosphoglucosamine mutase (Glaesserella parasuis serovar 5 (strain SH0165) (Haemophilus parasuis)).